Here is a 334-residue protein sequence, read N- to C-terminus: Protein-methionine-sulfoxide reductase catalytic subunit MsrP (334 aa).

A signal peptide (tat-type signal) is located at residues 1 to 44; that stretch reads MKKNQFLKESDVTAESVFFMKRRQVLKALGISAAALSLPHAAHA. Residues asparagine 88, 91-92, cysteine 146, threonine 181, asparagine 233, arginine 238, and 249-251 contribute to the Mo-molybdopterin site; these read YE and GIK.

This sequence belongs to the MsrP family. As to quaternary structure, heterodimer of a catalytic subunit (MsrP) and a heme-binding subunit (MsrQ). Mo-molybdopterin is required as a cofactor. Predicted to be exported by the Tat system. The position of the signal peptide cleavage has not been experimentally proven.

The protein localises to the periplasm. It carries out the reaction L-methionyl-[protein] + a quinone + H2O = L-methionyl-(S)-S-oxide-[protein] + a quinol. The enzyme catalyses L-methionyl-[protein] + a quinone + H2O = L-methionyl-(R)-S-oxide-[protein] + a quinol. Part of the MsrPQ system that repairs oxidized periplasmic proteins containing methionine sulfoxide residues (Met-O), using respiratory chain electrons. Thus protects these proteins from oxidative-stress damage caused by reactive species of oxygen and chlorine generated by the host defense mechanisms. MsrPQ is essential for the maintenance of envelope integrity under bleach stress, rescuing a wide series of structurally unrelated periplasmic proteins from methionine oxidation, including the primary periplasmic chaperone SurA and the lipoprotein Pal. The catalytic subunit MsrP is non-stereospecific, being able to reduce both (R-) and (S-) diastereoisomers of methionine sulfoxide. In Escherichia coli O17:K52:H18 (strain UMN026 / ExPEC), this protein is Protein-methionine-sulfoxide reductase catalytic subunit MsrP.